Here is a 208-residue protein sequence, read N- to C-terminus: Uracil phosphoribosyltransferase (208 aa).

Residues Arg78, Arg103, and 130–138 contribute to the 5-phospho-alpha-D-ribose 1-diphosphate site; that span reads DPMLATGGT. Uracil-binding positions include Ile193 and 198–200; that span reads GDA. Position 199 (Asp199) interacts with 5-phospho-alpha-D-ribose 1-diphosphate.

The protein belongs to the UPRTase family. The cofactor is Mg(2+).

It carries out the reaction UMP + diphosphate = 5-phospho-alpha-D-ribose 1-diphosphate + uracil. Its pathway is pyrimidine metabolism; UMP biosynthesis via salvage pathway; UMP from uracil: step 1/1. With respect to regulation, allosterically activated by GTP. Catalyzes the conversion of uracil and 5-phospho-alpha-D-ribose 1-diphosphate (PRPP) to UMP and diphosphate. The polypeptide is Uracil phosphoribosyltransferase (Solidesulfovibrio magneticus (strain ATCC 700980 / DSM 13731 / RS-1) (Desulfovibrio magneticus)).